Here is a 99-residue protein sequence, read N- to C-terminus: Small ribosomal subunit protein bS20 (99 aa).

It belongs to the bacterial ribosomal protein bS20 family.

Binds directly to 16S ribosomal RNA. The sequence is that of Small ribosomal subunit protein bS20 from Caldicellulosiruptor saccharolyticus (strain ATCC 43494 / DSM 8903 / Tp8T 6331).